The following is a 716-amino-acid chain: Polyribonucleotide nucleotidyltransferase (716 aa).

Positions 480 and 486 each coordinate Mg(2+). Residues 547-606 (PKIVQLQIDIDKISLVIGSTGKTVKAITDEFEVKVQIEQNGKIILFGDDDFKMQKAKERI) enclose the KH domain. Positions 616–711 (GEIYEGTVKK…KFGKIDLEIV (96 aa)) constitute an S1 motif domain.

The protein belongs to the polyribonucleotide nucleotidyltransferase family. Requires Mg(2+) as cofactor.

Its subcellular location is the cytoplasm. The enzyme catalyses RNA(n+1) + phosphate = RNA(n) + a ribonucleoside 5'-diphosphate. Involved in mRNA degradation. Catalyzes the phosphorolysis of single-stranded polyribonucleotides processively in the 3'- to 5'-direction. The polypeptide is Polyribonucleotide nucleotidyltransferase (Borreliella burgdorferi (strain ATCC 35210 / DSM 4680 / CIP 102532 / B31) (Borrelia burgdorferi)).